The chain runs to 318 residues: tRNA-cytidine(32) 2-sulfurtransferase (318 aa).

The PP-loop motif signature appears at 52-57 (SGGKDS). The [4Fe-4S] cluster site is built by C127, C130, and C218.

Belongs to the TtcA family. As to quaternary structure, homodimer. Mg(2+) is required as a cofactor. It depends on [4Fe-4S] cluster as a cofactor.

The protein resides in the cytoplasm. It carries out the reaction cytidine(32) in tRNA + S-sulfanyl-L-cysteinyl-[cysteine desulfurase] + AH2 + ATP = 2-thiocytidine(32) in tRNA + L-cysteinyl-[cysteine desulfurase] + A + AMP + diphosphate + H(+). It participates in tRNA modification. Catalyzes the ATP-dependent 2-thiolation of cytidine in position 32 of tRNA, to form 2-thiocytidine (s(2)C32). The sulfur atoms are provided by the cysteine/cysteine desulfurase (IscS) system. This chain is tRNA-cytidine(32) 2-sulfurtransferase, found in Actinobacillus pleuropneumoniae serotype 5b (strain L20).